The chain runs to 369 residues: Phosphoribosylformylglycinamidine cyclo-ligase (369 aa).

The disordered stretch occupies residues 1–22 (MSKRDTSQPKTGQPKTSKRRNG).

The protein belongs to the AIR synthase family.

It is found in the cytoplasm. The catalysed reaction is 2-formamido-N(1)-(5-O-phospho-beta-D-ribosyl)acetamidine + ATP = 5-amino-1-(5-phospho-beta-D-ribosyl)imidazole + ADP + phosphate + H(+). It functions in the pathway purine metabolism; IMP biosynthesis via de novo pathway; 5-amino-1-(5-phospho-D-ribosyl)imidazole from N(2)-formyl-N(1)-(5-phospho-D-ribosyl)glycinamide: step 2/2. The sequence is that of Phosphoribosylformylglycinamidine cyclo-ligase from Mesorhizobium japonicum (strain LMG 29417 / CECT 9101 / MAFF 303099) (Mesorhizobium loti (strain MAFF 303099)).